Reading from the N-terminus, the 58-residue chain is Dortoxin (58 aa).

The LCN-type CS-alpha/beta domain occupies 3-58 (VPGNYPLDKDGNTYTCLKLGENKDCQKVCKLHGVQYGYCYAFECWCKEYLDDKDSV). Intrachain disulfides connect cysteine 18-cysteine 41, cysteine 27-cysteine 46, and cysteine 31-cysteine 48.

Expressed by the venom gland.

Its subcellular location is the secreted. Its function is as follows. Binds to sodium channels (Nav) and affects the channel activation process. In mice, causes hyperactivity that persists until death. The polypeptide is Dortoxin (Parabuthus transvaalicus (Transvaal thick-tailed scorpion)).